Here is an 88-residue protein sequence, read N- to C-terminus: Small ribosomal subunit protein uS17 (88 aa).

The protein belongs to the universal ribosomal protein uS17 family. As to quaternary structure, part of the 30S ribosomal subunit.

Functionally, one of the primary rRNA binding proteins, it binds specifically to the 5'-end of 16S ribosomal RNA. The polypeptide is Small ribosomal subunit protein uS17 (Prochlorococcus marinus (strain MIT 9301)).